Here is a 292-residue protein sequence, read N- to C-terminus: AKT-interacting protein (292 aa).

Positions 1-11 (MNPLWSMSSGS) are enriched in polar residues. Residues 1–64 (MNPLWSMSSG…SPAPAAQSTN (64 aa)) are disordered. The span at 14 to 23 (KRAEGEEKTL) shows a compositional bias: basic and acidic residues. S30 bears the Phosphoserine mark. In terms of domain architecture, UBC core spans 74–222 (YLEYSLLAEF…VVDSVKVCTA (149 aa)).

The protein belongs to the ubiquitin-conjugating enzyme family. FTS subfamily. Component of the FTS/Hook/FHIP complex (FHF complex), composed of AKTIP/FTS, FHIP1B, and one or more members of the Hook family of proteins HOOK1, HOOK2, and HOOK3. Interacts directly with HOOK1, HOOK2 and HOOK3. The FHF complex associates with the homotypic vesicular sorting complex (the HOPS complex). Also interacts with AKT1. May interact with FHIP1A.

It is found in the cytoplasm. The protein resides in the cell membrane. Its function is as follows. Component of the FTS/Hook/FHIP complex (FHF complex). The FHF complex may function to promote vesicle trafficking and/or fusion via the homotypic vesicular protein sorting complex (the HOPS complex). Regulates apoptosis by enhancing phosphorylation and activation of AKT1. Increases release of TNFSF6 via the AKT1/GSK3B/NFATC1 signaling cascade. FHF complex promotes the distribution of AP-4 complex to the perinuclear area of the cell. The polypeptide is AKT-interacting protein (Aktip) (Rattus norvegicus (Rat)).